A 2804-amino-acid chain; its full sequence is Nipped-B-like protein (2804 aa).

Composition is skewed to polar residues over residues 128-173 (LSQN…QNSP) and 191-208 (HPSS…SVSS). A disordered region spans residues 128 to 340 (LSQNSMHSSP…LGKDEKEQSE (213 aa)). A phosphoserine mark is found at S150 and S162. Basic and acidic residues predominate over residues 234–249 (HHADNPRHGSSEDYLH). A phosphoserine mark is found at S243, S256, S274, S280, S284, S301, S306, and S318. Basic and acidic residues predominate over residues 331–340 (LGKDEKEQSE). S350 carries the post-translational modification Phosphoserine. The segment covering 482–500 (RESAIERERFSKEVQDKDK) has biased composition (basic and acidic residues). A disordered region spans residues 482-946 (RESAIERERF…NKAEFPSYLL (465 aa)). Residues 523–534 (PASQETGSTGNG) show a composition bias toward polar residues. Composition is skewed to basic and acidic residues over residues 562 to 572 (DSIKKPEEIKQ), 593 to 663 (PENH…ECKQ), 672 to 685 (KQNE…KPND), and 694 to 939 (ETTK…DNKA). Phosphothreonine is present on residues T713 and T746. The residue at position 912 (S912) is a Phosphoserine. The PxVxL motif motif lies at 996 to 1009 (NKGAKPVVVLQKLS). Disordered stretches follow at residues 1017-1047 (IKDR…DQSV) and 1060-1191 (ESTM…LTPE). Residue K1082 is modified to N6-acetyllysine. Residues S1089, S1090, and S1096 each carry the phosphoserine modification. Residues 1089-1100 (SSDEDNDSDEAF) show a composition bias toward acidic residues. A compositionally biased stretch (basic and acidic residues) spans 1109-1139 (KDDDKAWEYEERDRRSSGDHRRSGHSHEGRR). S1150, S1152, and S1154 each carry phosphoserine. Y1159 is modified (phosphotyrosine). The residue at position 1160 (S1160) is a Phosphoserine. Over residues 1171–1182 (KMKKKEKQKKRK) the composition is skewed to basic residues. T1189 carries the phosphothreonine modification. S1197 bears the Phosphoserine mark. A disordered region spans residues 1691–1710 (AMKSQKDEESSEGTHHAKEI). 5 HEAT repeats span residues 1767 to 1805 (AQSF…VDPS), 1843 to 1881 (PQLA…EQPT), 1945 to 1984 (YDWF…HILK), 2227 to 2267 (VNLK…LKEM), and 2313 to 2351 (LIHP…KYAG). Basic and acidic residues predominate over residues 2473-2489 (VKDKRKERKSSPSKENE). Disordered stretches follow at residues 2473-2520 (VKDK…DDIN) and 2651-2696 (TSLL…DSTE). 7 positions are modified to phosphoserine: S2493, S2509, S2511, S2513, S2515, S2652, and S2658. A compositionally biased stretch (acidic residues) spans 2510 to 2519 (DSDSDSEDDI). At T2667 the chain carries Phosphothreonine. S2672 bears the Phosphoserine mark.

It belongs to the SCC2/Nipped-B family. Heterodimerizes with MAU2/SCC4 to form the cohesin loading complex. The NIPBL-MAU2 heterodimer interacts with the cohesin complex composed of SMC1A/B and SMC3 heterodimer, RAD21 and STAG1/SA1. NIPBL directly contacts all members of the complex, RAD21, SMC1A/B, SMC3 and STAG1. Interacts directly (via PxVxL motif) with CBX5. Interacts with ZNF609 (via N-terminus). Interacts with the multiprotein complex Integrator. Interacts (via PxVxL motif) with CBX3. Interacts with BRD4. As to expression, widely expressed. Highly expressed in heart, skeletal muscle, fetal and adult liver, fetal and adult kidney. Expressed at intermediates level in thymus, placenta, peripheral leukocyte and small intestine. Weakly or not expressed in brain, colon, spleen and lung.

Its subcellular location is the nucleus. The protein localises to the chromosome. Plays an important role in the loading of the cohesin complex on to DNA. Forms a heterodimeric complex (also known as cohesin loading complex) with MAU2/SCC4 which mediates the loading of the cohesin complex onto chromatin. Plays a role in cohesin loading at sites of DNA damage. Its recruitment to double-strand breaks (DSBs) sites occurs in a CBX3-, RNF8- and RNF168-dependent manner whereas its recruitment to UV irradiation-induced DNA damage sites occurs in a ATM-, ATR-, RNF8- and RNF168-dependent manner. Along with ZNF609, promotes cortical neuron migration during brain development by regulating the transcription of crucial genes in this process. Preferentially binds promoters containing paused RNA polymerase II. Up-regulates the expression of SEMA3A, NRP1, PLXND1 and GABBR2 genes, among others. The chain is Nipped-B-like protein (NIPBL) from Homo sapiens (Human).